Reading from the N-terminus, the 313-residue chain is tRNA pseudouridine synthase B (313 aa).

The Nucleophile role is filled by aspartate 42.

Belongs to the pseudouridine synthase TruB family. Type 1 subfamily.

The catalysed reaction is uridine(55) in tRNA = pseudouridine(55) in tRNA. In terms of biological role, responsible for synthesis of pseudouridine from uracil-55 in the psi GC loop of transfer RNAs. The sequence is that of tRNA pseudouridine synthase B from Prochlorococcus marinus (strain SARG / CCMP1375 / SS120).